A 153-amino-acid chain; its full sequence is Protein SREK1IP1 (153 aa).

Residues 13–30 form a CCHC-type zinc finger; that stretch reads AGCRKCGYPGHLTFECRN. The disordered stretch occupies residues 44–153; that stretch reads VSSTSSEDSD…SPNRSEVTKK (110 aa). Serine 52 bears the Phosphoserine mark. The segment covering 66 to 84 has biased composition (basic and acidic residues); the sequence is QEKRINEEEEKKKEKSREK. Residues 85-94 are compositionally biased toward basic residues; that stretch reads IKLKKKRKRS. 2 positions are modified to phosphoserine: serine 96 and serine 97. Basic residues predominate over residues 106 to 141; it reads QKKQKYQKKEKKKEKKNKSKKGKHHKKEKKKRKKEK.

As to quaternary structure, interacts with SREK1/SFRS12.

Its function is as follows. Possible splicing regulator involved in the control of cellular survival. This chain is Protein SREK1IP1 (Srek1ip1), found in Rattus norvegicus (Rat).